Consider the following 272-residue polypeptide: Undecaprenyl-diphosphatase (272 aa).

Helical transmembrane passes span 6 to 26, 45 to 65, 92 to 112, 115 to 135, 189 to 209, 225 to 245, and 251 to 271; these read SLLI…LPVS, AKTF…VMFW, THIL…HDVI, LFYP…LLAA, YAAS…ATVL, MFAV…KTFL, and ISFV…YMVF.

The protein belongs to the UppP family.

Its subcellular location is the cell inner membrane. It catalyses the reaction di-trans,octa-cis-undecaprenyl diphosphate + H2O = di-trans,octa-cis-undecaprenyl phosphate + phosphate + H(+). Its function is as follows. Catalyzes the dephosphorylation of undecaprenyl diphosphate (UPP). Confers resistance to bacitracin. This is Undecaprenyl-diphosphatase from Pectobacterium carotovorum subsp. carotovorum (strain PC1).